We begin with the raw amino-acid sequence, 212 residues long: Interleukin-6 (212 aa).

An N-terminal signal peptide occupies residues methionine 1–proline 27. Cysteines 72 and 78 form a disulfide. N-linked (GlcNAc...) asparagine glycosylation occurs at asparagine 73. Serine 81 is modified (phosphoserine). An intrachain disulfide couples cysteine 101 to cysteine 111. Asparagine 172 is a glycosylation site (N-linked (GlcNAc...) asparagine).

This sequence belongs to the IL-6 superfamily. In terms of assembly, component of a hexamer of two molecules each of IL6, IL6R and IL6ST; first binds to IL6R to associate with the signaling subunit IL6ST. Interacts with IL6R (via the N-terminal ectodomain); this interaction may be affected by IL6R-binding with SORL1, hence decreasing IL6 cis signaling. Interacts with SORL1 (via the N-terminal ectodomain); this interaction leads to IL6 internalization and lysosomal degradation. May form a trimeric complex with the soluble SORL1 ectodomain and soluble IL6R receptor; this interaction might stabilize circulating IL6, hence promoting IL6 trans signaling.

The protein resides in the secreted. Its function is as follows. Cytokine with a wide variety of biological functions in immunity, tissue regeneration, and metabolism. Binds to IL6R, then the complex associates to the signaling subunit IL6ST/gp130 to trigger the intracellular IL6-signaling pathway. The interaction with the membrane-bound IL6R and IL6ST stimulates 'classic signaling', whereas the binding of IL6 and soluble IL6R to IL6ST stimulates 'trans-signaling'. Alternatively, 'cluster signaling' occurs when membrane-bound IL6:IL6R complexes on transmitter cells activate IL6ST receptors on neighboring receiver cells. In terms of biological role, IL6 is a potent inducer of the acute phase response. Rapid production of IL6 contributes to host defense during infection and tissue injury, but excessive IL6 synthesis is involved in disease pathology. In the innate immune response, is synthesized by myeloid cells, such as macrophages and dendritic cells, upon recognition of pathogens through toll-like receptors (TLRs) at the site of infection or tissue injury. In the adaptive immune response, is required for the differentiation of B cells into immunoglobulin-secreting cells. Plays a major role in the differentiation of CD4(+) T cell subsets. Essential factor for the development of T follicular helper (Tfh) cells that are required for the induction of germinal-center formation. Required to drive naive CD4(+) T cells to the Th17 lineage. Also required for proliferation of myeloma cells and the survival of plasmablast cells. Acts as an essential factor in bone homeostasis and on vessels directly or indirectly by induction of VEGF, resulting in increased angiogenesis activity and vascular permeability. Induces, through 'trans-signaling' and synergistically with IL1B and TNF, the production of VEGF. Involved in metabolic controls, is discharged into the bloodstream after muscle contraction increasing lipolysis and improving insulin resistance. 'Trans-signaling' in central nervous system also regulates energy and glucose homeostasis. Mediates, through GLP-1, crosstalk between insulin-sensitive tissues, intestinal L cells and pancreatic islets to adapt to changes in insulin demand. Also acts as a myokine. Plays a protective role during liver injury, being required for maintenance of tissue regeneration. Also has a pivotal role in iron metabolism by regulating HAMP/hepcidin expression upon inflammation or bacterial infection. Through activation of IL6ST-YAP-NOTCH pathway, induces inflammation-induced epithelial regeneration. The sequence is that of Interleukin-6 (IL6) from Macaca mulatta (Rhesus macaque).